The chain runs to 613 residues: tRNA (uracil-5-)-methyltransferase homolog A (613 aa).

Residues 1–46 (MSEPAAEVPEPMEDCGQDASAVPSSAAPLCQKEEAGPGPAAGPGTQ) are disordered. One can recognise an RRM domain in the interval 63–136 (FKLELQNVPR…CPLSVRLARP (74 aa)). Residues 170–200 (YTEQLEQKRLECERVLQKLAKEIGNTNRALL) adopt a coiled-coil conformation. A Phosphoserine modification is found at Ser-368. Residues Gln-401, Glu-451, and Asp-500 each contribute to the S-adenosyl-L-methionine site. The Nucleophile role is filled by Cys-528. Glu-571 functions as the Proton acceptor in the catalytic mechanism.

It belongs to the class I-like SAM-binding methyltransferase superfamily. RNA M5U methyltransferase family. As to expression, widely expressed at low level. Expressed at higher level in proliferating cells.

The protein localises to the cytoplasm. It localises to the cytosol. It carries out the reaction uridine(54) in tRNA + S-adenosyl-L-methionine = 5-methyluridine(54) in tRNA + S-adenosyl-L-homocysteine + H(+). The enzyme catalyses a uridine in mRNA + S-adenosyl-L-methionine = a 5-methyluridine in mRNA + S-adenosyl-L-homocysteine + H(+). Its function is as follows. S-adenosyl-L-methionine-dependent methyltransferase that catalyzes the formation of 5-methyl-uridine in tRNAs and some mRNAs. Mainly catalyzes the methylation of uridine at position 54 (m5U54) in cytosolic tRNAs. Also able to mediate the formation of 5-methyl-uridine in some mRNAs. The sequence is that of tRNA (uracil-5-)-methyltransferase homolog A from Mus musculus (Mouse).